We begin with the raw amino-acid sequence, 319 residues long: Dehydrogenase/reductase SDR family member 9 (319 aa).

Residues 1–20 (MLLWVLALLFLCAFLWNYKG) form the signal peptide. NAD(+) is bound by residues 34–58 (ITGCDSGFGNLAARTFDRKGFRVIA) and D83. S164 is a binding site for substrate. Y176 acts as the Proton acceptor in catalysis. Position 180 (K180) interacts with NAD(+).

It belongs to the short-chain dehydrogenases/reductases (SDR) family. As to quaternary structure, homotetramer. Highly expressed in epithelium of estrus uterus.

It localises to the microsome membrane. It is found in the endoplasmic reticulum membrane. It carries out the reaction 3beta-hydroxy-5alpha-pregnane-20-one + NAD(+) = 5alpha-pregnane-3,20-dione + NADH + H(+). The catalysed reaction is 17beta-hydroxy-5alpha-androstan-3-one + NAD(+) = 5alpha-androstan-3,17-dione + NADH + H(+). The enzyme catalyses androsterone + NAD(+) = 5alpha-androstan-3,17-dione + NADH + H(+). It catalyses the reaction 5alpha-androstane-3alpha,17beta-diol + NAD(+) = 17beta-hydroxy-5alpha-androstan-3-one + NADH + H(+). It carries out the reaction all-trans-retinol + NAD(+) = all-trans-retinal + NADH + H(+). The catalysed reaction is 3alpha-hydroxy-5alpha-pregnan-20-one + NAD(+) = 5alpha-pregnane-3,20-dione + NADH + H(+). Its function is as follows. 3-alpha-hydroxysteroid dehydrogenase that converts 3-alpha-tetrahydroprogesterone (allopregnanolone) to dihydroxyprogesterone and 3-alpha-androstanediol to dihydroxyprogesterone. Plays also role in the biosynthesis of retinoic acid from retinaldehyde. Can utilize both NADH and NADPH. This is Dehydrogenase/reductase SDR family member 9 (Dhrs9) from Rattus norvegicus (Rat).